The sequence spans 451 residues: 3-phosphoshikimate 1-carboxyvinyltransferase (451 aa).

3 residues coordinate 3-phosphoshikimate: Lys-38, Ser-39, and Arg-43. Lys-38 is a binding site for phosphoenolpyruvate. Residues Gly-111 and Arg-140 each coordinate phosphoenolpyruvate. 3-phosphoshikimate contacts are provided by Ser-185, Gln-187, Asp-335, and Lys-362. Gln-187 is a phosphoenolpyruvate binding site. Asp-335 serves as the catalytic Proton acceptor. Residues Arg-366 and Arg-408 each contribute to the phosphoenolpyruvate site.

This sequence belongs to the EPSP synthase family. As to quaternary structure, monomer.

Its subcellular location is the cytoplasm. It catalyses the reaction 3-phosphoshikimate + phosphoenolpyruvate = 5-O-(1-carboxyvinyl)-3-phosphoshikimate + phosphate. Its pathway is metabolic intermediate biosynthesis; chorismate biosynthesis; chorismate from D-erythrose 4-phosphate and phosphoenolpyruvate: step 6/7. Its function is as follows. Catalyzes the transfer of the enolpyruvyl moiety of phosphoenolpyruvate (PEP) to the 5-hydroxyl of shikimate-3-phosphate (S3P) to produce enolpyruvyl shikimate-3-phosphate and inorganic phosphate. The polypeptide is 3-phosphoshikimate 1-carboxyvinyltransferase (Crocosphaera subtropica (strain ATCC 51142 / BH68) (Cyanothece sp. (strain ATCC 51142))).